Reading from the N-terminus, the 623-residue chain is Bifunctional methionine biosynthesis protein MetXA/MetW (623 aa).

Over residues 1 to 17 the composition is skewed to polar residues; sequence MTSGRSTRVTMFESQAS. A disordered region spans residues 1–30; that stretch reads MTSGRSTRVTMFESQASMGEPSNEDLSSTD. In terms of domain architecture, AB hydrolase-1 spans 77 to 385; that stretch reads NAVLVCHAVS…TTNAGHDAFL (309 aa). Ser-183 (nucleophile) is an active-site residue. Arg-253 provides a ligand contact to substrate. Catalysis depends on residues Asp-348 and His-381. A substrate-binding site is contributed by Asp-382. Positions 417–619 are metW; it reads NVDEESILEI…NADTAVIAFH (203 aa).

The protein in the N-terminal section; belongs to the AB hydrolase superfamily. MetX family. In the C-terminal section; belongs to the MetW family. In terms of assembly, homodimer.

The protein resides in the cytoplasm. It catalyses the reaction L-homoserine + acetyl-CoA = O-acetyl-L-homoserine + CoA. Its pathway is amino-acid biosynthesis; L-methionine biosynthesis via de novo pathway; O-acetyl-L-homoserine from L-homoserine: step 1/1. Its function is as follows. Transfers an acetyl group from acetyl-CoA to L-homoserine, forming acetyl-L-homoserine. The polypeptide is Bifunctional methionine biosynthesis protein MetXA/MetW (Rhodopirellula baltica (strain DSM 10527 / NCIMB 13988 / SH1)).